We begin with the raw amino-acid sequence, 105 residues long: Large ribosomal subunit protein mL49 (105 aa).

The transit peptide at 1-15 (MRSSLKPVLSNLRFN) directs the protein to the mitochondrion.

Belongs to the mitochondrion-specific ribosomal protein mL49 family. In terms of assembly, component of the mitochondrial large ribosomal subunit (mt-LSU). Mature yeast 74S mitochondrial ribosomes consist of a small (37S) and a large (54S) subunit. The 37S small subunit contains a 15S ribosomal RNA (15S mt-rRNA) and at least 32 different proteins. The 54S large subunit contains a 21S rRNA (21S mt-rRNA) and at least 45 different proteins.

The protein resides in the mitochondrion. Its function is as follows. Component of the mitochondrial ribosome (mitoribosome), a dedicated translation machinery responsible for the synthesis of mitochondrial genome-encoded proteins, including at least some of the essential transmembrane subunits of the mitochondrial respiratory chain. The mitoribosomes are attached to the mitochondrial inner membrane and translation products are cotranslationally integrated into the membrane. The polypeptide is Large ribosomal subunit protein mL49 (img2) (Schizosaccharomyces pombe (strain 972 / ATCC 24843) (Fission yeast)).